The following is a 205-amino-acid chain: Thiamine-phosphate synthase (205 aa).

4-amino-2-methyl-5-(diphosphooxymethyl)pyrimidine is bound by residues 37 to 41 and Asn69; that span reads QVREK. Mg(2+) contacts are provided by Asp70 and Asp89. Ser108 lines the 4-amino-2-methyl-5-(diphosphooxymethyl)pyrimidine pocket. 134–136 is a 2-[(2R,5Z)-2-carboxy-4-methylthiazol-5(2H)-ylidene]ethyl phosphate binding site; sequence TGS. Lys137 is a 4-amino-2-methyl-5-(diphosphooxymethyl)pyrimidine binding site. 2-[(2R,5Z)-2-carboxy-4-methylthiazol-5(2H)-ylidene]ethyl phosphate-binding positions include Gly165 and 185 to 186; that span reads IS.

This sequence belongs to the thiamine-phosphate synthase family. The cofactor is Mg(2+).

The enzyme catalyses 2-[(2R,5Z)-2-carboxy-4-methylthiazol-5(2H)-ylidene]ethyl phosphate + 4-amino-2-methyl-5-(diphosphooxymethyl)pyrimidine + 2 H(+) = thiamine phosphate + CO2 + diphosphate. The catalysed reaction is 2-(2-carboxy-4-methylthiazol-5-yl)ethyl phosphate + 4-amino-2-methyl-5-(diphosphooxymethyl)pyrimidine + 2 H(+) = thiamine phosphate + CO2 + diphosphate. It catalyses the reaction 4-methyl-5-(2-phosphooxyethyl)-thiazole + 4-amino-2-methyl-5-(diphosphooxymethyl)pyrimidine + H(+) = thiamine phosphate + diphosphate. The protein operates within cofactor biosynthesis; thiamine diphosphate biosynthesis; thiamine phosphate from 4-amino-2-methyl-5-diphosphomethylpyrimidine and 4-methyl-5-(2-phosphoethyl)-thiazole: step 1/1. Condenses 4-methyl-5-(beta-hydroxyethyl)thiazole monophosphate (THZ-P) and 2-methyl-4-amino-5-hydroxymethyl pyrimidine pyrophosphate (HMP-PP) to form thiamine monophosphate (TMP). The protein is Thiamine-phosphate synthase of Clostridium botulinum (strain Kyoto / Type A2).